Consider the following 341-residue polypeptide: Mitochondrial transcription factor 1 (341 aa).

Leu-23, Glu-77, Asp-101, and Asn-137 together coordinate S-adenosyl-L-methionine.

It belongs to the class I-like SAM-binding methyltransferase superfamily. rRNA adenine N(6)-methyltransferase family.

The protein resides in the mitochondrion. In terms of biological role, mitochondrial transcription factor that confers selective promoter recognition on the core subunit of the yeast mitochondrial RNA polymerase. Interacts with DNA in a non-specific manner. The sequence is that of Mitochondrial transcription factor 1 (MTF1) from Saccharomyces paradoxus (Yeast).